The sequence spans 230 residues: Urease accessory protein UreF (230 aa).

It belongs to the UreF family. UreD, UreF and UreG form a complex that acts as a GTP-hydrolysis-dependent molecular chaperone, activating the urease apoprotein by helping to assemble the nickel containing metallocenter of UreC. The UreE protein probably delivers the nickel.

The protein localises to the cytoplasm. Functionally, required for maturation of urease via the functional incorporation of the urease nickel metallocenter. This chain is Urease accessory protein UreF, found in Polynucleobacter asymbioticus (strain DSM 18221 / CIP 109841 / QLW-P1DMWA-1) (Polynucleobacter necessarius subsp. asymbioticus).